Reading from the N-terminus, the 535-residue chain is GMP synthase [glutamine-hydrolyzing] (535 aa).

Residues 24 to 217 form the Glutamine amidotransferase type-1 domain; sequence KILIVDFGSQ…VRNISGLGGD (194 aa). The Nucleophile role is filled by C101. Catalysis depends on residues H191 and E193. The region spanning 218–410 is the GMPS ATP-PPase domain; the sequence is WTMHAFREEE…LGLPDVFVGR (193 aa). 245–251 contributes to the ATP binding site; that stretch reads SGGVDSA.

As to quaternary structure, homodimer.

It catalyses the reaction XMP + L-glutamine + ATP + H2O = GMP + L-glutamate + AMP + diphosphate + 2 H(+). The protein operates within purine metabolism; GMP biosynthesis; GMP from XMP (L-Gln route): step 1/1. Catalyzes the synthesis of GMP from XMP. This is GMP synthase [glutamine-hydrolyzing] from Bradyrhizobium sp. (strain ORS 278).